Reading from the N-terminus, the 319-residue chain is Coproporphyrin III ferrochelatase 2 (319 aa).

Fe-coproporphyrin III is bound by residues Y13, R30, 46–47 (RY), S54, and Y125. Fe(2+) contacts are provided by H181 and E262.

The protein belongs to the ferrochelatase family.

The protein localises to the cytoplasm. The catalysed reaction is Fe-coproporphyrin III + 2 H(+) = coproporphyrin III + Fe(2+). Its pathway is porphyrin-containing compound metabolism; protoheme biosynthesis. Its function is as follows. Involved in coproporphyrin-dependent heme b biosynthesis. Catalyzes the insertion of ferrous iron into coproporphyrin III to form Fe-coproporphyrin III. This chain is Coproporphyrin III ferrochelatase 2, found in Bacillus cereus (strain ZK / E33L).